Here is a 259-residue protein sequence, read N- to C-terminus: MQESLTSGSSASLNIHDKRFAALYELGGKITELFAKELISQSGLPWSSQEPLVVLDNACGTGAVSSVLHHTIGNDKKANWHLTCGDKSEDMLHYTRQKMLQEEWHNAEVKIVNAQDTRLPSAHFTHIFTAFAIWVCTLSAAITNLSGDLPAPSEKEIHGVYNVGWDEEASVRAKFEQAGFNDIKVRKVIKEYLVPVNQFVESCTILIPTIVNIFWTQDQRDQYESELPMAVHRYVEGKYGRDGMASMEAEAIIATGHKH.

The protein belongs to the class I-like SAM-binding methyltransferase superfamily.

It participates in secondary metabolite biosynthesis. Its function is as follows. Methyltransferase; part of the gene cluster that mediates the biosynthesis of aflavarin, a bicoumarin that exhibits anti-insectan activity against the fungivorous beetle C.hemipterus. The chain is Methyltransferase afvD from Aspergillus flavus (strain ATCC 200026 / FGSC A1120 / IAM 13836 / NRRL 3357 / JCM 12722 / SRRC 167).